Reading from the N-terminus, the 294-residue chain is tRNA dimethylallyltransferase (294 aa).

10–17 contacts ATP; that stretch reads GITASGKS. 12–17 lines the substrate pocket; it reads TASGKS. Positions 36-39 are interaction with substrate tRNA; it reads DSKQ.

This sequence belongs to the IPP transferase family. Monomer. The cofactor is Mg(2+).

The enzyme catalyses adenosine(37) in tRNA + dimethylallyl diphosphate = N(6)-dimethylallyladenosine(37) in tRNA + diphosphate. Its function is as follows. Catalyzes the transfer of a dimethylallyl group onto the adenine at position 37 in tRNAs that read codons beginning with uridine, leading to the formation of N6-(dimethylallyl)adenosine (i(6)A). This Wolbachia sp. subsp. Drosophila simulans (strain wRi) protein is tRNA dimethylallyltransferase.